The following is a 284-amino-acid chain: Nucleotide-binding protein in ptsO 5'region (284 aa).

Residue Gly-8–Ser-15 coordinates ATP. GTP is bound at residue Asp-60 to Asn-63.

The protein belongs to the RapZ-like family.

Functionally, displays ATPase and GTPase activities. This Pseudomonas putida (Arthrobacter siderocapsulatus) protein is Nucleotide-binding protein in ptsO 5'region.